The primary structure comprises 618 residues: Alpha-dioxygenase PIOX (618 aa).

His-157 serves as the catalytic Proton acceptor. Residue Asp-158 participates in Ca(2+) binding. A heme b-binding site is contributed by His-162. Ca(2+) is bound by residues Thr-210, Trp-212, Asp-214, and Ser-216. His-311 serves as a coordination point for hexadecanoate. Heme b contacts are provided by His-382, Arg-479, and Arg-483. Glu-599 provides a ligand contact to hexadecanoate.

Belongs to the peroxidase family. Heme b is required as a cofactor. Ca(2+) serves as cofactor.

The enzyme catalyses a 1,2-saturated fatty acid + O2 = a (2R)-2-hydroperoxy fatty acid. It catalyses the reaction (9Z,12Z)-octadecadienoate + O2 = (2R,9Z,12Z)-2-hydroperoxyoctadecadienoate. The catalysed reaction is hexadecanoate + O2 = (2R)-2-hydroperoxyhexadecanoate. It carries out the reaction (9Z,12Z,15Z)-octadecatrienoate + O2 = (R)-2-hydroperoxy-(9Z,12Z,15Z)-octadecatrienoate. The enzyme catalyses tetradecanoate + O2 = (2R)-2-hydroperoxytetradecanoate. It catalyses the reaction octadecanoate + O2 = (2R)-2-hydroperoxyoctadecanoate. The catalysed reaction is (9Z)-octadecenoate + O2 = (2R,9Z)-2-hydroperoxyoctadecenoate. Functionally, alpha-dioxygenase that catalyzes the primary oxygenation step of a variety of 14-20 carbon fatty acids, containing up to three unsaturated bonds, into their corresponding 2R-hydroperoxides. Involved in the production of oxylipins that function in cell signaling, wound healing, and protection from infection. In Oryza sativa subsp. japonica (Rice), this protein is Alpha-dioxygenase PIOX.